A 193-amino-acid polypeptide reads, in one-letter code: Segregation and condensation protein B (193 aa).

The protein belongs to the ScpB family. As to quaternary structure, homodimer. Homodimerization may be required to stabilize the binding of ScpA to the Smc head domains. Component of a cohesin-like complex composed of ScpA, ScpB and the Smc homodimer, in which ScpA and ScpB bind to the head domain of Smc. The presence of the three proteins is required for the association of the complex with DNA.

It is found in the cytoplasm. In terms of biological role, participates in chromosomal partition during cell division. May act via the formation of a condensin-like complex containing Smc and ScpA that pull DNA away from mid-cell into both cell halves. This Shouchella clausii (strain KSM-K16) (Alkalihalobacillus clausii) protein is Segregation and condensation protein B.